Reading from the N-terminus, the 176-residue chain is ATP-dependent protease subunit HslV (176 aa).

Thr5 is a catalytic residue. Positions 161, 164, and 167 each coordinate Na(+).

Belongs to the peptidase T1B family. HslV subfamily. A double ring-shaped homohexamer of HslV is capped on each side by a ring-shaped HslU homohexamer. The assembly of the HslU/HslV complex is dependent on binding of ATP.

Its subcellular location is the cytoplasm. The catalysed reaction is ATP-dependent cleavage of peptide bonds with broad specificity.. Its activity is regulated as follows. Allosterically activated by HslU binding. Its function is as follows. Protease subunit of a proteasome-like degradation complex believed to be a general protein degrading machinery. This is ATP-dependent protease subunit HslV from Desulfitobacterium hafniense (strain Y51).